The sequence spans 529 residues: Peptide chain release factor 3 (529 aa).

The 270-residue stretch at 11–280 folds into the tr-type G domain; that stretch reads NKRRTFAIIS…GLTEWAPKPQ (270 aa). GTP contacts are provided by residues 20–27, 88–92, and 142–145; these read SHPDAGKT, DTPGH, and NKLD.

The protein belongs to the TRAFAC class translation factor GTPase superfamily. Classic translation factor GTPase family. PrfC subfamily.

Its subcellular location is the cytoplasm. Its function is as follows. Increases the formation of ribosomal termination complexes and stimulates activities of RF-1 and RF-2. It binds guanine nucleotides and has strong preference for UGA stop codons. It may interact directly with the ribosome. The stimulation of RF-1 and RF-2 is significantly reduced by GTP and GDP, but not by GMP. This is Peptide chain release factor 3 from Mannheimia succiniciproducens (strain KCTC 0769BP / MBEL55E).